The chain runs to 182 residues: ATP synthase subunit b (182 aa).

A helical transmembrane segment spans residues 25–45 (VVLAGFAVLFYIVVKFVVPMF).

This sequence belongs to the ATPase B chain family. F-type ATPases have 2 components, F(1) - the catalytic core - and F(0) - the membrane proton channel. F(1) has five subunits: alpha(3), beta(3), gamma(1), delta(1), epsilon(1). F(0) has three main subunits: a(1), b(2) and c(10-14). The alpha and beta chains form an alternating ring which encloses part of the gamma chain. F(1) is attached to F(0) by a central stalk formed by the gamma and epsilon chains, while a peripheral stalk is formed by the delta and b chains.

The protein localises to the cell membrane. In terms of biological role, f(1)F(0) ATP synthase produces ATP from ADP in the presence of a proton or sodium gradient. F-type ATPases consist of two structural domains, F(1) containing the extramembraneous catalytic core and F(0) containing the membrane proton channel, linked together by a central stalk and a peripheral stalk. During catalysis, ATP synthesis in the catalytic domain of F(1) is coupled via a rotary mechanism of the central stalk subunits to proton translocation. Its function is as follows. Component of the F(0) channel, it forms part of the peripheral stalk, linking F(1) to F(0). The polypeptide is ATP synthase subunit b (Arthrobacter sp. (strain FB24)).